Consider the following 471-residue polypeptide: Bifunctional protein GlmU (471 aa).

Residues 1 to 232 are pyrophosphorylase; that stretch reads MSDITAVLLA…EEDALAPNDR (232 aa). Residues 9–12, K23, Q73, 78–79, 102–104, G141, E157, and N230 contribute to the UDP-N-acetyl-alpha-D-glucosamine site; these read LAAG, GT, and YGD. Mg(2+) is bound at residue D104. N230 is a binding site for Mg(2+). Residues 233 to 253 are linker; sequence VELARAEARLRRQINERHMRN. An N-acetyltransferase region spans residues 254–471; sequence GVTIINPDAT…RQRKMNREGT (218 aa). UDP-N-acetyl-alpha-D-glucosamine-binding residues include R335 and K353. H365 functions as the Proton acceptor in the catalytic mechanism. UDP-N-acetyl-alpha-D-glucosamine-binding residues include Y368 and N379. Acetyl-CoA is bound by residues A382, 388–389, A425, and R444; that span reads NY.

In the N-terminal section; belongs to the N-acetylglucosamine-1-phosphate uridyltransferase family. This sequence in the C-terminal section; belongs to the transferase hexapeptide repeat family. In terms of assembly, homotrimer. Requires Mg(2+) as cofactor.

Its subcellular location is the cytoplasm. The enzyme catalyses alpha-D-glucosamine 1-phosphate + acetyl-CoA = N-acetyl-alpha-D-glucosamine 1-phosphate + CoA + H(+). The catalysed reaction is N-acetyl-alpha-D-glucosamine 1-phosphate + UTP + H(+) = UDP-N-acetyl-alpha-D-glucosamine + diphosphate. Its pathway is nucleotide-sugar biosynthesis; UDP-N-acetyl-alpha-D-glucosamine biosynthesis; N-acetyl-alpha-D-glucosamine 1-phosphate from alpha-D-glucosamine 6-phosphate (route II): step 2/2. It functions in the pathway nucleotide-sugar biosynthesis; UDP-N-acetyl-alpha-D-glucosamine biosynthesis; UDP-N-acetyl-alpha-D-glucosamine from N-acetyl-alpha-D-glucosamine 1-phosphate: step 1/1. The protein operates within bacterial outer membrane biogenesis; LPS lipid A biosynthesis. Functionally, catalyzes the last two sequential reactions in the de novo biosynthetic pathway for UDP-N-acetylglucosamine (UDP-GlcNAc). The C-terminal domain catalyzes the transfer of acetyl group from acetyl coenzyme A to glucosamine-1-phosphate (GlcN-1-P) to produce N-acetylglucosamine-1-phosphate (GlcNAc-1-P), which is converted into UDP-GlcNAc by the transfer of uridine 5-monophosphate (from uridine 5-triphosphate), a reaction catalyzed by the N-terminal domain. This Symbiobacterium thermophilum (strain DSM 24528 / JCM 14929 / IAM 14863 / T) protein is Bifunctional protein GlmU.